A 122-amino-acid chain; its full sequence is Small ribosomal subunit protein bS16 (122 aa).

Belongs to the bacterial ribosomal protein bS16 family.

The chain is Small ribosomal subunit protein bS16 from Prochlorococcus marinus (strain MIT 9313).